The primary structure comprises 495 residues: ATP synthase subunit beta, chloroplastic (495 aa).

ATP is bound at residue 172-179 (GGAGVGKT).

It belongs to the ATPase alpha/beta chains family. F-type ATPases have 2 components, CF(1) - the catalytic core - and CF(0) - the membrane proton channel. CF(1) has five subunits: alpha(3), beta(3), gamma(1), delta(1), epsilon(1). CF(0) has four main subunits: a(1), b(1), b'(1) and c(9-12).

The protein resides in the plastid. Its subcellular location is the chloroplast thylakoid membrane. It carries out the reaction ATP + H2O + 4 H(+)(in) = ADP + phosphate + 5 H(+)(out). Its function is as follows. Produces ATP from ADP in the presence of a proton gradient across the membrane. The catalytic sites are hosted primarily by the beta subunits. This Pteridium aquilinum (Bracken fern) protein is ATP synthase subunit beta, chloroplastic.